The primary structure comprises 278 residues: Bifunctional protein FolD (278 aa).

Residues 165–167, Ser-190, and Thr-231 each bind NADP(+); that span reads GRS.

It belongs to the tetrahydrofolate dehydrogenase/cyclohydrolase family. In terms of assembly, homodimer.

It catalyses the reaction (6R)-5,10-methylene-5,6,7,8-tetrahydrofolate + NADP(+) = (6R)-5,10-methenyltetrahydrofolate + NADPH. The catalysed reaction is (6R)-5,10-methenyltetrahydrofolate + H2O = (6R)-10-formyltetrahydrofolate + H(+). It participates in one-carbon metabolism; tetrahydrofolate interconversion. Functionally, catalyzes the oxidation of 5,10-methylenetetrahydrofolate to 5,10-methenyltetrahydrofolate and then the hydrolysis of 5,10-methenyltetrahydrofolate to 10-formyltetrahydrofolate. The sequence is that of Bifunctional protein FolD from Clostridium acetobutylicum (strain ATCC 824 / DSM 792 / JCM 1419 / IAM 19013 / LMG 5710 / NBRC 13948 / NRRL B-527 / VKM B-1787 / 2291 / W).